A 726-amino-acid chain; its full sequence is Fatty acid oxidation complex subunit alpha (726 aa).

An enoyl-CoA hydratase/isomerase region spans residues 1-189 (MIYQGENLSV…KIGMVDGIVS (189 aa)). Position 296 (Asp-296) interacts with substrate. The tract at residues 311–726 (EPVKNAAVLG…PKSSVSSPSV (416 aa)) is 3-hydroxyacyl-CoA dehydrogenase. NAD(+)-binding positions include Met-324, Asp-343, 400 to 402 (VVE), Lys-407, and Ser-429. His-450 acts as the For 3-hydroxyacyl-CoA dehydrogenase activity in catalysis. Residue Asn-453 coordinates NAD(+). The substrate site is built by Asn-500 and Tyr-660.

This sequence in the N-terminal section; belongs to the enoyl-CoA hydratase/isomerase family. The protein in the C-terminal section; belongs to the 3-hydroxyacyl-CoA dehydrogenase family. In terms of assembly, heterotetramer of two alpha chains (FadB) and two beta chains (FadA).

The catalysed reaction is a (3S)-3-hydroxyacyl-CoA + NAD(+) = a 3-oxoacyl-CoA + NADH + H(+). It catalyses the reaction a (3S)-3-hydroxyacyl-CoA = a (2E)-enoyl-CoA + H2O. The enzyme catalyses a 4-saturated-(3S)-3-hydroxyacyl-CoA = a (3E)-enoyl-CoA + H2O. It carries out the reaction (3S)-3-hydroxybutanoyl-CoA = (3R)-3-hydroxybutanoyl-CoA. The catalysed reaction is a (3Z)-enoyl-CoA = a 4-saturated (2E)-enoyl-CoA. It catalyses the reaction a (3E)-enoyl-CoA = a 4-saturated (2E)-enoyl-CoA. Its pathway is lipid metabolism; fatty acid beta-oxidation. Its function is as follows. Involved in the aerobic and anaerobic degradation of long-chain fatty acids via beta-oxidation cycle. Catalyzes the formation of 3-oxoacyl-CoA from enoyl-CoA via L-3-hydroxyacyl-CoA. It can also use D-3-hydroxyacyl-CoA and cis-3-enoyl-CoA as substrate. The protein is Fatty acid oxidation complex subunit alpha of Aliivibrio salmonicida (strain LFI1238) (Vibrio salmonicida (strain LFI1238)).